The sequence spans 495 residues: Glucose-6-phosphate 1-dehydrogenase (495 aa).

NADP(+) contacts are provided by residues 11 to 18 (GASGDLAK), Arg45, 84 to 85 (DV), and Lys147. 4 residues coordinate substrate: His177, Lys181, Glu215, and Asp234. His239 (proton acceptor) is an active-site residue. Substrate is bound by residues Lys339 and Lys344.

It belongs to the glucose-6-phosphate dehydrogenase family.

The enzyme catalyses D-glucose 6-phosphate + NADP(+) = 6-phospho-D-glucono-1,5-lactone + NADPH + H(+). It functions in the pathway carbohydrate degradation; pentose phosphate pathway; D-ribulose 5-phosphate from D-glucose 6-phosphate (oxidative stage): step 1/3. Functionally, catalyzes the oxidation of glucose 6-phosphate to 6-phosphogluconolactone. The protein is Glucose-6-phosphate 1-dehydrogenase of Streptococcus pneumoniae serotype 4 (strain ATCC BAA-334 / TIGR4).